The primary structure comprises 337 residues: Ketol-acid reductoisomerase (NADP(+)) (337 aa).

In terms of domain architecture, KARI N-terminal Rossmann spans 3–183; it reads VEMFYDDDAD…GGARAGVIKT (181 aa). NADP(+) contacts are provided by residues 26–29, Lys-49, Ser-52, Ser-54, and 84–87; these read YGSQ and DTAQ. His-109 is a catalytic residue. Residue Gly-135 participates in NADP(+) binding. In terms of domain architecture, KARI C-terminal knotted spans 184–329; it reads TFKEETETDL…KKLRDLMSWV (146 aa). Mg(2+) is bound by residues Asp-192, Glu-196, Glu-228, and Glu-232. Ser-253 serves as a coordination point for substrate.

The protein belongs to the ketol-acid reductoisomerase family. It depends on Mg(2+) as a cofactor.

It catalyses the reaction (2R)-2,3-dihydroxy-3-methylbutanoate + NADP(+) = (2S)-2-acetolactate + NADPH + H(+). The enzyme catalyses (2R,3R)-2,3-dihydroxy-3-methylpentanoate + NADP(+) = (S)-2-ethyl-2-hydroxy-3-oxobutanoate + NADPH + H(+). Its pathway is amino-acid biosynthesis; L-isoleucine biosynthesis; L-isoleucine from 2-oxobutanoate: step 2/4. The protein operates within amino-acid biosynthesis; L-valine biosynthesis; L-valine from pyruvate: step 2/4. In terms of biological role, involved in the biosynthesis of branched-chain amino acids (BCAA). Catalyzes an alkyl-migration followed by a ketol-acid reduction of (S)-2-acetolactate (S2AL) to yield (R)-2,3-dihydroxy-isovalerate. In the isomerase reaction, S2AL is rearranged via a Mg-dependent methyl migration to produce 3-hydroxy-3-methyl-2-ketobutyrate (HMKB). In the reductase reaction, this 2-ketoacid undergoes a metal-dependent reduction by NADPH to yield (R)-2,3-dihydroxy-isovalerate. The protein is Ketol-acid reductoisomerase (NADP(+)) of Rhodococcus opacus (strain B4).